Here is a 426-residue protein sequence, read N- to C-terminus: Phosphomethylpyrimidine synthase (426 aa).

Substrate contacts are provided by residues asparagine 65, methionine 94, tyrosine 123, histidine 162, 184–186 (SRG), 225–228 (DGMR), and glutamate 264. Position 268 (histidine 268) interacts with Zn(2+). Substrate is bound at residue tyrosine 291. Residue histidine 332 participates in Zn(2+) binding. Residues cysteine 408, cysteine 411, and cysteine 415 each coordinate [4Fe-4S] cluster.

Belongs to the ThiC family. Requires [4Fe-4S] cluster as cofactor.

It carries out the reaction 5-amino-1-(5-phospho-beta-D-ribosyl)imidazole + S-adenosyl-L-methionine = 4-amino-2-methyl-5-(phosphooxymethyl)pyrimidine + CO + 5'-deoxyadenosine + formate + L-methionine + 3 H(+). It participates in cofactor biosynthesis; thiamine diphosphate biosynthesis. In terms of biological role, catalyzes the synthesis of the hydroxymethylpyrimidine phosphate (HMP-P) moiety of thiamine from aminoimidazole ribotide (AIR) in a radical S-adenosyl-L-methionine (SAM)-dependent reaction. The sequence is that of Phosphomethylpyrimidine synthase from Methanococcus maripaludis (strain C5 / ATCC BAA-1333).